We begin with the raw amino-acid sequence, 365 residues long: Histidinol-phosphate aminotransferase (365 aa).

The interval 1 to 23 (MSRPVPNPGILDIAPYTPGKSPV) is disordered. Lys221 is modified (N6-(pyridoxal phosphate)lysine).

This sequence belongs to the class-II pyridoxal-phosphate-dependent aminotransferase family. Histidinol-phosphate aminotransferase subfamily. As to quaternary structure, homodimer. Requires pyridoxal 5'-phosphate as cofactor.

The catalysed reaction is L-histidinol phosphate + 2-oxoglutarate = 3-(imidazol-4-yl)-2-oxopropyl phosphate + L-glutamate. It functions in the pathway amino-acid biosynthesis; L-histidine biosynthesis; L-histidine from 5-phospho-alpha-D-ribose 1-diphosphate: step 7/9. The chain is Histidinol-phosphate aminotransferase from Rhodopseudomonas palustris (strain BisB18).